A 260-amino-acid polypeptide reads, in one-letter code: Centromere protein K (260 aa).

Residues 84-173 (EEELQKVKKE…KKLMNALGEF (90 aa)) adopt a coiled-coil conformation.

Belongs to the CENP-K/MCM22 family. Component of the CENPA-HI complex, at least composed of CENPH, CENPI, CENPK, CENPL, CENPM, CENPO and CENPP.

The protein resides in the nucleus. It localises to the chromosome. Its subcellular location is the centromere. It is found in the kinetochore. In terms of biological role, component of the CENPA-HI complex, a centromeric complex involved in assembly of kinetochore proteins, mitotic progression and chromosome segregation. The chain is Centromere protein K (CENPK) from Gallus gallus (Chicken).